The chain runs to 101 residues: Small ribosomal subunit protein uS14 (101 aa).

The protein belongs to the universal ribosomal protein uS14 family. As to quaternary structure, part of the 30S ribosomal subunit. Contacts proteins S3 and S10.

Binds 16S rRNA, required for the assembly of 30S particles and may also be responsible for determining the conformation of the 16S rRNA at the A site. The sequence is that of Small ribosomal subunit protein uS14 from Psychromonas ingrahamii (strain DSM 17664 / CCUG 51855 / 37).